Here is a 120-residue protein sequence, read N- to C-terminus: Large ribosomal subunit protein uL18c (120 aa).

It belongs to the universal ribosomal protein uL18 family. In terms of assembly, part of the 50S ribosomal subunit; contacts the 5S rRNA.

The protein localises to the plastid. Its subcellular location is the chloroplast. Its function is as follows. Binds 5S rRNA, forms part of the central protuberance of the 50S subunit. This is Large ribosomal subunit protein uL18c (rpl18) from Porphyra purpurea (Red seaweed).